Reading from the N-terminus, the 486-residue chain is Achaete-scute complex protein T8 (486 aa).

2 disordered regions span residues 1-26 (MAAL…GIKT) and 75-158 (AAST…LPLP). Residues 75-86 (AASTTNTTPISS) are compositionally biased toward polar residues. The bHLH domain occupies 159–223 (QAVARRNARE…RMAVEYIRSL (65 aa)).

Efficient DNA binding requires dimerization with another bHLH protein. As to expression, l(1)SC, SC and AC strongly label the presumptive stomatogastric nervous system, while ASE is more prominent in the presumptive procephalic lobe.

Functionally, involved in the determination of the neuronal precursors of optic lobes in the central nervous system. In Drosophila melanogaster (Fruit fly), this protein is Achaete-scute complex protein T8 (ase).